Consider the following 706-residue polypeptide: uncharacterized protein (706 aa).

Coiled-coil stretches lie at residues 86–162 (TKNV…AKKI), 269–299 (DYLKDVEKSIEQLSDNYEQYLSNIDIFVNEL), and 337–427 (DDYI…QSDY).

This is an uncharacterized protein from Staphylococcus aureus (strain MRSA252).